Reading from the N-terminus, the 694-residue chain is Elongation factor G (694 aa).

One can recognise a tr-type G domain in the interval serine 9–lysine 288. GTP is bound by residues alanine 18 to threonine 25, aspartate 82 to histidine 86, and asparagine 136 to aspartate 139.

The protein belongs to the TRAFAC class translation factor GTPase superfamily. Classic translation factor GTPase family. EF-G/EF-2 subfamily.

The protein resides in the cytoplasm. Its function is as follows. Catalyzes the GTP-dependent ribosomal translocation step during translation elongation. During this step, the ribosome changes from the pre-translocational (PRE) to the post-translocational (POST) state as the newly formed A-site-bound peptidyl-tRNA and P-site-bound deacylated tRNA move to the P and E sites, respectively. Catalyzes the coordinated movement of the two tRNA molecules, the mRNA and conformational changes in the ribosome. The protein is Elongation factor G of Chlamydia caviae (strain ATCC VR-813 / DSM 19441 / 03DC25 / GPIC) (Chlamydophila caviae).